The sequence spans 221 residues: GTPase Obg (221 aa).

An OBG-type G domain is found at 1–61 (PSALRLVLLN…LKYKLLEIVQ (61 aa)). GTP-binding positions include 10–13 (NKAD) and 42–44 (SAV). Residues 82–162 (VVHRTKGQFQ…IGGISFEWEP (81 aa)) enclose the OCT domain.

It belongs to the TRAFAC class OBG-HflX-like GTPase superfamily. OBG GTPase family. Monomer. The cofactor is Mg(2+).

It localises to the cytoplasm. Its function is as follows. An essential GTPase which binds GTP, GDP and possibly (p)ppGpp with moderate affinity, with high nucleotide exchange rates and a fairly low GTP hydrolysis rate. Plays a role in control of the cell cycle, stress response, ribosome biogenesis and in those bacteria that undergo differentiation, in morphogenesis control. The sequence is that of GTPase Obg from Corynebacterium melassecola.